The following is a 359-amino-acid chain: Peptide chain release factor 1 (359 aa).

N5-methylglutamine is present on Gln-236.

Belongs to the prokaryotic/mitochondrial release factor family. Methylated by PrmC. Methylation increases the termination efficiency of RF1.

It is found in the cytoplasm. In terms of biological role, peptide chain release factor 1 directs the termination of translation in response to the peptide chain termination codons UAG and UAA. The protein is Peptide chain release factor 1 of Streptococcus pyogenes serotype M6 (strain ATCC BAA-946 / MGAS10394).